The sequence spans 390 residues: Oxysterol-binding protein 10 (390 aa).

It belongs to the OSBP family.

In Dictyostelium discoideum (Social amoeba), this protein is Oxysterol-binding protein 10 (osbJ).